The sequence spans 344 residues: DNA-directed RNA polymerase subunit alpha (344 aa).

Residues 1 to 238 (MKVIKTAPLI…KQLGVFGEKP (238 aa)) form an alpha N-terminal domain (alpha-NTD) region. Residues 253–344 (DAKDLSAKIE…EKLEDKGGND (92 aa)) form an alpha C-terminal domain (alpha-CTD) region.

It belongs to the RNA polymerase alpha chain family. In terms of assembly, homodimer. The RNAP catalytic core consists of 2 alpha, 1 beta, 1 beta' and 1 omega subunit. When a sigma factor is associated with the core the holoenzyme is formed, which can initiate transcription.

It catalyses the reaction RNA(n) + a ribonucleoside 5'-triphosphate = RNA(n+1) + diphosphate. DNA-dependent RNA polymerase catalyzes the transcription of DNA into RNA using the four ribonucleoside triphosphates as substrates. In Helicobacter acinonychis (strain Sheeba), this protein is DNA-directed RNA polymerase subunit alpha.